Here is a 585-residue protein sequence, read N- to C-terminus: Glutamate decarboxylase 2 (585 aa).

Residues 1-24 (MASPGSGFWSFGSEDGSGDPENSG) are disordered. Residues Ser-3, Ser-6, Ser-10, and Ser-13 each carry the phosphoserine modification. 2 S-palmitoyl cysteine lipidation sites follow: Cys-30 and Cys-45. 181–183 (QLS) serves as a coordination point for substrate. Lys-396 bears the N6-(pyridoxal phosphate)lysine mark. Arg-558 contacts substrate.

It belongs to the group II decarboxylase family. In terms of assembly, homodimer. Pyridoxal 5'-phosphate serves as cofactor. Phosphorylated; which does not affect kinetic parameters or subcellular location. In terms of processing, palmitoylated; which is required for presynaptic clustering.

The protein localises to the cytoplasm. Its subcellular location is the cytosol. It localises to the cytoplasmic vesicle. It is found in the presynaptic cell membrane. The protein resides in the golgi apparatus membrane. The enzyme catalyses L-glutamate + H(+) = 4-aminobutanoate + CO2. Functionally, catalyzes the production of GABA. This Sus scrofa (Pig) protein is Glutamate decarboxylase 2 (GAD2).